Consider the following 598-residue polypeptide: Ceramide transfer protein (598 aa).

Polar residues predominate over residues 1–11; that stretch reads MSDNQSWNSSG. The interval 1–24 is disordered; sequence MSDNQSWNSSGSEEDPETESGPPV. In terms of domain architecture, PH spans 23–117; the sequence is PVERCGVLSK…WIDAIEQHKT (95 aa). Ser-126 is modified (phosphoserine). Ser-132 carries the phosphoserine; by PKD modification. Ser-135 carries the phosphoserine modification. The interval 202 to 221 is disordered; that stretch reads DDEDDFPTTRSDGDFLHNTN. Residues 268-301 adopt a coiled-coil conformation; sequence KREESWQKRHDKEMEKRRRLEEAYKNAMAELKKK. Ser-315 carries the post-translational modification Phosphoserine. An FFAT motif is present at residues 321-327; sequence EFFDAVE. One can recognise an START domain in the interval 363 to 592; the sequence is GTHRFVQKVE…FTSYVQEKTA (230 aa). Positions 446, 467, 504, and 553 each coordinate an N-acylsphing-4-enine.

Interacts with VAPA and VAPB. Interaction with VAPB is less efficient than with VAPA. Interacts (via FFAT motif) with the MOSPD2 (via MSP domain). Post-translationally, phosphorylation on Ser-132 decreases the affinity toward phosphatidylinositol 4-phosphate at Golgi membranes and reduces ceramide transfer activity. Inactivated by hyperphosphorylation of serine residues by CSNK1G2/CK1 that triggers dissociation from the Golgi complex, thus down-regulating ER-to-Golgi transport of ceramide and sphingomyelin synthesis.

Its subcellular location is the cytoplasm. The protein localises to the golgi apparatus. It localises to the endoplasmic reticulum. The enzyme catalyses N-hexadecanoylsphing-4-enine(in) = N-hexadecanoylsphing-4-enine(out). Shelters ceramides and diacylglycerol lipids inside its START domain and mediates the intracellular trafficking of ceramides and diacylglycerol lipids in a non-vesicular manner. This is Ceramide transfer protein (CERT1) from Cricetulus griseus (Chinese hamster).